A 534-amino-acid chain; its full sequence is MGSKRKHESGDVEVKKPKHDNEVKGKEKKEKKEKKEKKEKKEKKEKKEKKEKKEKKEKNEKKEKKEKKAKKEKTEETEETDSTVSTVSSSSSGYTQAAELTALPQSEIDEFLQTNEVTVEDPHKLGFRPILSFDHVQLQSKIAPIVTKFPKPTPIQSASWPYLLNGDDVVGVAETGSGKTFAFGVPAINNIITDNKKGLRVLCISPTRELALQIYDNLTMLTKNCGLTCVAIYGGVPKDQQIKAVKTASVVVATPGRLVDLLNDGAVDLSTIDYLVLDEADRMLEKGFEEDIKNIIGCTNKQRQTLMFTATWPKEVRELAATFMNKAVKVSIGNRDELAANKRITQTVEVMDPRDKERRLLQLLRQYGSDQKILVFALYKKEATRVEAMLRRSGFNVAAIHGDLSQQQRTSALDSFKRGDSNLLLATDVAARGLDIPNVKVVINLTFPLTVEDYVHRIGRTGRAGQTGIAHTLFTEHEKHLSGALMNVLRGAGQPVPDELLKFGGHTKKKSHSAYGAFFKDVDMTKTAKKIKFE.

The disordered stretch occupies residues 1–96; that stretch reads MGSKRKHESG…VSSSSSGYTQ (96 aa). Positions 8 to 30 are enriched in basic and acidic residues; sequence ESGDVEVKKPKHDNEVKGKEKKE. Basic residues predominate over residues 31 to 53; it reads KKEKKEKKEKKEKKEKKEKKEKK. Basic and acidic residues predominate over residues 54-63; that stretch reads EKKEKNEKKE. Residues 82 to 92 show a composition bias toward low complexity; the sequence is STVSTVSSSSS. The Q motif signature appears at 131 to 157; sequence LSFDHVQLQSKIAPIVTKFPKPTPIQS. The Helicase ATP-binding domain maps to 160–330; sequence WPYLLNGDDV…ATFMNKAVKV (171 aa). Position 173–180 (173–180) interacts with ATP; sequence AETGSGKT. The DEAD box motif lies at 278 to 281; sequence DEAD. One can recognise a Helicase C-terminal domain in the interval 359-504; it reads RLLQLLRQYG…PVPDELLKFG (146 aa).

It belongs to the DEAD box helicase family. DDX5/DBP2 subfamily.

The protein localises to the nucleus. The protein resides in the nucleolus. It catalyses the reaction ATP + H2O = ADP + phosphate + H(+). ATP-dependent RNA helicase required for 60S ribosomal subunit synthesis. Involved in efficient pre-rRNA processing, predominantly at site A3, which is necessary for the normal formation of 25S and 5.8S rRNAs. The chain is ATP-dependent RNA helicase DBP3 (DBP3) from Meyerozyma guilliermondii (strain ATCC 6260 / CBS 566 / DSM 6381 / JCM 1539 / NBRC 10279 / NRRL Y-324) (Yeast).